The sequence spans 560 residues: Thermosome subunit 1 (560 aa).

Residues 525–550 form a disordered region; it reads LSGGQTGSDDDDGGAPGGMGGGMGGM. Gly residues predominate over residues 538–550; it reads GAPGGMGGGMGGM.

The protein belongs to the TCP-1 chaperonin family. As to quaternary structure, the thermosome or CCT complex is a oligomeric complex of two octameric double-ring structures; the complex is probably a heterooligomer of CCT1, CCT2 and CCT3 with yet unknown stoichiometry.

Its function is as follows. Molecular chaperone that assists in the folding or refolding of nascent or denatured proteins along with ATP hydrolysis. ATPase activity is highest in thermosome assemblies containing CCT1:CCT2, followed by assemblies containing CCT1:CCT2:CCT3. Required for thermosome ATPase activity. Not required for growth. This chain is Thermosome subunit 1 (cct1), found in Haloferax volcanii (strain ATCC 29605 / DSM 3757 / JCM 8879 / NBRC 14742 / NCIMB 2012 / VKM B-1768 / DS2) (Halobacterium volcanii).